The following is a 428-amino-acid chain: ATP-dependent RNA helicase RhlB (428 aa).

Positions 9–37 (QKFSDFALHPLVLEALEKKGFQHCTPIQA) match the Q motif motif. The 180-residue stretch at 40–219 (LPLTLSGRDV…FEQMNNAEYV (180 aa)) folds into the Helicase ATP-binding domain. Residue 53 to 60 (AQTGTGKT) coordinates ATP. Residues 165-168 (DEAD) carry the DEAD box motif. Residues 245 to 390 (RLLQTLIEEE…VSKYNSDALL (146 aa)) form the Helicase C-terminal domain. Residues 392-428 (DLPAPKRLARPRGGNGPRRNSAPRRGGAPRNNRKRSG) are disordered. Low complexity predominate over residues 408-421 (PRRNSAPRRGGAPR).

Belongs to the DEAD box helicase family. RhlB subfamily. Component of the RNA degradosome, which is a multiprotein complex involved in RNA processing and mRNA degradation.

It is found in the cytoplasm. The catalysed reaction is ATP + H2O = ADP + phosphate + H(+). Functionally, DEAD-box RNA helicase involved in RNA degradation. Has RNA-dependent ATPase activity and unwinds double-stranded RNA. This is ATP-dependent RNA helicase RhlB from Serratia proteamaculans (strain 568).